The chain runs to 1301 residues: Dentin sialophosphoprotein (1301 aa).

Positions 1 to 15 (MKIITYFCIWAVAWA) are cleaved as a signal peptide. N-linked (GlcNAc...) asparagine glycosylation is found at asparagine 41 and asparagine 49. The segment at 55-89 (KESGVLVHEGDRGRQENTQDGHKGEGNGSKWAEVG) is disordered. The span at 62 to 79 (HEGDRGRQENTQDGHKGE) shows a compositional bias: basic and acidic residues. Asparagine 81, asparagine 130, asparagine 150, asparagine 190, asparagine 191, asparagine 209, and asparagine 222 each carry an N-linked (GlcNAc...) asparagine glycan. Residues 146–165 (AGATNRSNTNGNTDKNTQNG) are compositionally biased toward polar residues. The segment at 146–171 (AGATNRSNTNGNTDKNTQNGDVGDAG) is disordered. A disordered region spans residues 202-1301 (NSCRNEGNTS…SDSNHSTSDD (1100 aa)). The span at 203–221 (SCRNEGNTSEITPQINSKR) shows a compositional bias: polar residues. Residues 251–267 (ADEDEDEGSGDDEDEEA) are compositionally biased toward acidic residues. Serine 259 is modified (phosphoserine; by CK1). A compositionally biased stretch (polar residues) spans 271–280 (KDSSNNSKGQ). An N-linked (GlcNAc...) asparagine glycan is attached at asparagine 275. 2 stretches are compositionally biased toward basic and acidic residues: residues 281–293 (EGQD…DHDS) and 300–327 (DSKE…KSEE). Residue serine 301 is modified to Phosphoserine. Asparagine 336 carries N-linked (GlcNAc...) asparagine glycosylation. Over residues 340–377 (RIEDTQKLNHRESKRVENRITKESETHAVGKSQDKGIE) the composition is skewed to basic and acidic residues. N-linked (GlcNAc...) asparagine glycosylation is present at asparagine 387. A compositionally biased stretch (basic and acidic residues) spans 388–404 (ITKEVGKGNEGKEDKGQ). Composition is skewed to low complexity over residues 439 to 452 (SNTG…GYDS) and 462 to 487 (GDDP…NSSS). Residues 488–490 (RGD) carry the Cell attachment site motif. Residues 488-506 (RGDASYNSDESKDNGNGSD) are compositionally biased toward polar residues. The span at 518-534 (TSDTNNSDSNGNGNNGN) shows a compositional bias: low complexity. Residues 536 to 549 (DNDKSDSGKGKSDS) are compositionally biased toward basic and acidic residues. The span at 555–564 (SDSSNSSDSS) shows a compositional bias: low complexity. The span at 581–595 (DSSDSDSSDSSDSDS) shows a compositional bias: acidic residues. The span at 596 to 619 (SDSSNSSDSSDSSDSSDSSDSSDS) shows a compositional bias: low complexity. Residues 620–642 (SDSKSDSSKSESDSSDSDSKSDS) show a composition bias toward basic and acidic residues. 4 stretches are compositionally biased toward low complexity: residues 643-705 (SDSN…SDSS), 715-1264 (SSDS…STSD), 1272-1284 (QSKS…NGSD), and 1292-1301 (SDSNHSTSDD).

In terms of assembly, interacts with FBLN7. Post-translationally, DSP is glycosylated. Expressed in teeth. DPP is synthesized by odontoblast and transiently expressed by pre-ameloblasts.

Its subcellular location is the secreted. It localises to the extracellular space. It is found in the extracellular matrix. Its function is as follows. DSP may be an important factor in dentinogenesis. DPP may bind high amount of calcium and facilitate initial mineralization of dentin matrix collagen as well as regulate the size and shape of the crystals. The polypeptide is Dentin sialophosphoprotein (DSPP) (Homo sapiens (Human)).